The following is a 321-amino-acid chain: Olfactory receptor 5K4 (321 aa).

Over 1 to 25 (MARENHSLAAEFILIGFTNYPELKT) the chain is Extracellular. N-linked (GlcNAc...) asparagine glycosylation occurs at Asn-5. The chain crosses the membrane as a helical span at residues 26-46 (LLFVVFSAIYLVTMVGNLGLV). Topologically, residues 47–54 (ALIYVERR) are cytoplasmic. Residues 55-75 (LLTPMYIFLGNLALMDSCCSC) form a helical membrane-spanning segment. The Extracellular segment spans residues 76–97 (AVTPKMLENFFSEDRIISLYEC). Cys-97 and Cys-179 form a disulfide bridge. A helical transmembrane segment spans residues 98–118 (MAQFYFLCLAETTDCFLLATM). The Cytoplasmic segment spans residues 119–139 (AYDRYVAICHPLQYHTMMSKT). Residues 140-160 (LCIRMTTGAFKAGNLHSMIHV) form a helical membrane-spanning segment. Residues 161–205 (GLLLRLTFCRSNKIHHFFCDILPLYRLSCTDPSINELMIYIFSIP) lie on the Extracellular side of the membrane. A helical membrane pass occupies residues 206 to 226 (IQIFTIATVLISYLCILLTVF). Over 227–240 (KMKSKEGRGKAFST) the chain is Cytoplasmic. The chain crosses the membrane as a helical span at residues 241-261 (CASHFLSVSIFYICLLMYIGP). At 262–268 (SEEGDKD) the chain is on the extracellular side. The helical transmembrane segment at 269–289 (TPVAIFYAIVIPLLNPFIYSL) threads the bilayer. Topologically, residues 290 to 321 (RNKEVINVLKKIMRNYNILKQTCSIANLFLIY) are cytoplasmic.

The protein belongs to the G-protein coupled receptor 1 family.

It localises to the cell membrane. Odorant receptor. The polypeptide is Olfactory receptor 5K4 (OR5K4) (Homo sapiens (Human)).